The sequence spans 42 residues: Photosystem I reaction center subunit IX (42 aa).

Residues 7 to 27 traverse the membrane as a helical segment; that stretch reads YLSVAPVLSTLWFVALAGLLI.

It belongs to the PsaJ family.

Its subcellular location is the plastid. It is found in the chloroplast thylakoid membrane. Functionally, may help in the organization of the PsaE and PsaF subunits. This Atropa belladonna (Belladonna) protein is Photosystem I reaction center subunit IX.